The primary structure comprises 282 residues: Cholesterol 25-hydroxylase-like protein 1, member 1 (282 aa).

N-linked (GlcNAc...) asparagine glycosylation is present at N3. The next 3 membrane-spanning stretches (helical) occupy residues 40 to 60 (FFPVLLAFSSYIIFSVPFAVL), 85 to 107 (MLRTLWTAVYNHLVFVLPAVLIT), and 127 to 147 (FSGGLGALLVFDTQYFLWHMV). A Fatty acid hydroxylase domain is found at 133–265 (ALLVFDTQYF…FSHWDKIFGT (133 aa)). The Histidine box-1 motif lies at 144–148 (WHMVH). A Histidine box-2 motif is present at residues 159 to 163 (HAIHH). A Histidine box-3 motif is present at residues 240–246 (AHDMHHQ).

It belongs to the sterol desaturase family. It depends on Fe cation as a cofactor.

The protein resides in the endoplasmic reticulum membrane. Functionally, may catalyze the formation of 25-hydroxycholesterol from cholesterol. This is Cholesterol 25-hydroxylase-like protein 1, member 1 (ch25hl1.1) from Danio rerio (Zebrafish).